The following is a 303-amino-acid chain: NAD kinase (303 aa).

The active-site Proton acceptor is the Asp71. NAD(+) contacts are provided by residues 71-72 (DG), 145-146 (ND), Arg156, Arg173, Asp175, 186-191 (TGYSLS), and Gln245.

The protein belongs to the NAD kinase family. Requires a divalent metal cation as cofactor.

The protein localises to the cytoplasm. The enzyme catalyses NAD(+) + ATP = ADP + NADP(+) + H(+). Involved in the regulation of the intracellular balance of NAD and NADP, and is a key enzyme in the biosynthesis of NADP. Catalyzes specifically the phosphorylation on 2'-hydroxyl of the adenosine moiety of NAD to yield NADP. The sequence is that of NAD kinase from Magnetococcus marinus (strain ATCC BAA-1437 / JCM 17883 / MC-1).